Here is a 277-residue protein sequence, read N- to C-terminus: NAD kinase (277 aa).

The active-site Proton acceptor is Asp-67. Residues 67-68 (DG), Arg-72, 137-138 (NE), Lys-148, Arg-165, Asp-167, 178-183 (TGYAMS), Leu-202, and Gln-236 contribute to the NAD(+) site.

The protein belongs to the NAD kinase family. The cofactor is a divalent metal cation.

The protein localises to the cytoplasm. The enzyme catalyses NAD(+) + ATP = ADP + NADP(+) + H(+). Its function is as follows. Involved in the regulation of the intracellular balance of NAD and NADP, and is a key enzyme in the biosynthesis of NADP. Catalyzes specifically the phosphorylation on 2'-hydroxyl of the adenosine moiety of NAD to yield NADP. The protein is NAD kinase of Pyrococcus furiosus (strain ATCC 43587 / DSM 3638 / JCM 8422 / Vc1).